A 269-amino-acid polypeptide reads, in one-letter code: Aminodeoxychorismate lyase (269 aa).

Lys140 carries the post-translational modification N6-(pyridoxal phosphate)lysine.

Belongs to the class-IV pyridoxal-phosphate-dependent aminotransferase family. As to quaternary structure, homodimer. Requires pyridoxal 5'-phosphate as cofactor.

It carries out the reaction 4-amino-4-deoxychorismate = 4-aminobenzoate + pyruvate + H(+). The protein operates within cofactor biosynthesis; tetrahydrofolate biosynthesis; 4-aminobenzoate from chorismate: step 2/2. In terms of biological role, involved in the biosynthesis of p-aminobenzoate (PABA), a precursor of tetrahydrofolate. Converts 4-amino-4-deoxychorismate into 4-aminobenzoate (PABA) and pyruvate. In Escherichia coli (strain K12), this protein is Aminodeoxychorismate lyase (pabC).